A 475-amino-acid polypeptide reads, in one-letter code: Tetratricopeptide repeat protein 29 (475 aa).

7 TPR repeats span residues 92–131 (DALR…EDAE), 136–173 (FEDV…AQLI), 182–215 (AEAH…TQGR), 234–267 (LRTY…AKEG), 274–307 (GEAS…STEL), 314–347 (GRAY…ARNN), and 354–387 (VRAS…TVEL). The disordered stretch occupies residues 436-475 (DIEPDPVTEEFRGSTVETVSQNSEHLEELSRFPGDQKNET). Residues 459 to 475 (EHLEELSRFPGDQKNET) are compositionally biased toward basic and acidic residues.

The protein localises to the cytoplasm. Its subcellular location is the cytoskeleton. It localises to the flagellum axoneme. Functionally, axonemal protein which is implicated in axonemal and/or peri-axonemal structure assembly and regulates flagellum assembly and beating and therefore sperm motility. The sequence is that of Tetratricopeptide repeat protein 29 (TTC29) from Macaca fascicularis (Crab-eating macaque).